We begin with the raw amino-acid sequence, 824 residues long: Leucine--tRNA ligase (824 aa).

The 'HIGH' region signature appears at 41-51 (PYPSGTLHVGH). The 'KMSKS' region motif lies at 580-584 (KMSKS). Position 583 (Lys583) interacts with ATP.

The protein belongs to the class-I aminoacyl-tRNA synthetase family.

Its subcellular location is the cytoplasm. The catalysed reaction is tRNA(Leu) + L-leucine + ATP = L-leucyl-tRNA(Leu) + AMP + diphosphate. This Thermotoga petrophila (strain ATCC BAA-488 / DSM 13995 / JCM 10881 / RKU-1) protein is Leucine--tRNA ligase.